The primary structure comprises 1290 residues: Alpha-factor-transporting ATPase (1290 aa).

Residues M1–R25 lie on the Cytoplasmic side of the membrane. The chain crosses the membrane as a helical span at residues L26–I46. Residues L27–K319 form the ABC transmembrane type-1 1 domain. Residues L47–S75 lie on the Extracellular side of the membrane. N61 is a glycosylation site (N-linked (GlcNAc...) asparagine). Residues M76 to W96 traverse the membrane as a helical segment. Topologically, residues M97–E150 are cytoplasmic. Residues A151–Y171 form a helical membrane-spanning segment. Over Y172–S173 the chain is Extracellular. Residues W174–F194 traverse the membrane as a helical segment. Residues S195–G262 lie on the Cytoplasmic side of the membrane. The chain crosses the membrane as a helical span at residues I263 to I283. Residues K284 to C296 lie on the Extracellular side of the membrane. The chain crosses the membrane as a helical span at residues F297–L317. Over Q318–K715 the chain is Cytoplasmic. Residues L357–H603 enclose the ABC transporter 1 domain. Position 392 to 399 (G392 to S399) interacts with ATP. Residues I716–Y736 traverse the membrane as a helical segment. Residues L717–R1007 enclose the ABC transmembrane type-1 2 domain. Over T737–S763 the chain is Extracellular. A helical transmembrane segment spans residues L764–L784. Topologically, residues D785 to E838 are cytoplasmic. Residues F839–V859 traverse the membrane as a helical segment. The Extracellular segment spans residues S860–S865. Residues L866–L886 form a helical membrane-spanning segment. Residues Q887–T945 are Cytoplasmic-facing. A helical membrane pass occupies residues G946–Y966. Residues G967–M981 are Extracellular-facing. The chain crosses the membrane as a helical span at residues F982–I1002. The Cytoplasmic segment spans residues P1003–S1290. K1022 is covalently cross-linked (Glycyl lysine isopeptide (Lys-Gly) (interchain with G-Cter in ubiquitin)). The 236-residue stretch at V1052–N1287 folds into the ABC transporter 2 domain. G1087–S1094 serves as a coordination point for ATP.

It belongs to the ABC transporter superfamily. Alpha-factor sex pheromone exporter (TC 3.A.1.206) family. In terms of processing, degraded via the ubiquitin system.

The protein resides in the membrane. The enzyme catalyses an [alpha-factor](in) + ATP + H2O = an [alpha-factor](out) + ADP + phosphate + H(+). Its function is as follows. STE6 is required in yeast MATA cells for production of A-factor pheromone. STE6 is involved in the transport of the farnesyl-derivation of the A-factor pheromone. The polypeptide is Alpha-factor-transporting ATPase (STE6) (Saccharomyces cerevisiae (strain ATCC 204508 / S288c) (Baker's yeast)).